A 176-amino-acid polypeptide reads, in one-letter code: NAD(P)H-quinone oxidoreductase subunit J (176 aa).

This sequence belongs to the complex I 30 kDa subunit family. As to quaternary structure, NDH-1 can be composed of about 15 different subunits; different subcomplexes with different compositions have been identified which probably have different functions.

The protein localises to the cellular thylakoid membrane. The catalysed reaction is a plastoquinone + NADH + (n+1) H(+)(in) = a plastoquinol + NAD(+) + n H(+)(out). It carries out the reaction a plastoquinone + NADPH + (n+1) H(+)(in) = a plastoquinol + NADP(+) + n H(+)(out). Functionally, NDH-1 shuttles electrons from an unknown electron donor, via FMN and iron-sulfur (Fe-S) centers, to quinones in the respiratory and/or the photosynthetic chain. The immediate electron acceptor for the enzyme in this species is believed to be plastoquinone. Couples the redox reaction to proton translocation, and thus conserves the redox energy in a proton gradient. Cyanobacterial NDH-1 also plays a role in inorganic carbon-concentration. This Prochlorococcus marinus subsp. pastoris (strain CCMP1986 / NIES-2087 / MED4) protein is NAD(P)H-quinone oxidoreductase subunit J.